A 65-amino-acid chain; its full sequence is Large ribosomal subunit protein bL35 (65 aa).

Belongs to the bacterial ribosomal protein bL35 family.

The polypeptide is Large ribosomal subunit protein bL35 (Yersinia enterocolitica serotype O:8 / biotype 1B (strain NCTC 13174 / 8081)).